The sequence spans 792 residues: Chloride channel protein CLC-d (792 aa).

12 consecutive transmembrane segments (helical) span residues 78-98 (FFSL…NLSV), 119-139 (AGFI…AYII), 170-190 (RTLI…LALG), 195-215 (LVHT…TKYH), 237-257 (GCAA…LFAL), 267-287 (QLMW…RTAM), 320-340 (LLPM…FNQL), 361-381 (IIEA…LPLL), 451-471 (LLTF…TAVP), 474-494 (QFVP…MFVV), 508-528 (ALLG…SLCV), and 529-549 (IMVE…VLLI). CBS domains follow at residues 592–652 (QSQK…KVDF) and 704–761 (LNPS…SSAV). A helical membrane pass occupies residues 731–751 (HLFVVPRPSRVIGLITRKDLL).

The protein belongs to the chloride channel (TC 2.A.49) family. In terms of assembly, homodimer. Broadly expressed in the plant, but predominantly in the silique.

The protein resides in the membrane. In terms of biological role, voltage-gated chloride channel. This is Chloride channel protein CLC-d (CLC-D) from Arabidopsis thaliana (Mouse-ear cress).